Here is a 124-residue protein sequence, read N- to C-terminus: Small ribosomal subunit protein uS12 (124 aa).

Asp-89 is modified (3-methylthioaspartic acid). Residues 104-124 (TDGVENRKQSRSKYGTKRPKK) form a disordered region. Over residues 112-124 (QSRSKYGTKRPKK) the composition is skewed to basic residues.

The protein belongs to the universal ribosomal protein uS12 family. In terms of assembly, part of the 30S ribosomal subunit. Contacts proteins S8 and S17. May interact with IF1 in the 30S initiation complex.

Functionally, with S4 and S5 plays an important role in translational accuracy. Interacts with and stabilizes bases of the 16S rRNA that are involved in tRNA selection in the A site and with the mRNA backbone. Located at the interface of the 30S and 50S subunits, it traverses the body of the 30S subunit contacting proteins on the other side and probably holding the rRNA structure together. The combined cluster of proteins S8, S12 and S17 appears to hold together the shoulder and platform of the 30S subunit. The sequence is that of Small ribosomal subunit protein uS12 from Thermosipho melanesiensis (strain DSM 12029 / CIP 104789 / BI429).